The following is a 400-amino-acid chain: S-adenosylmethionine decarboxylase proenzyme (400 aa).

Residues E18 and E21 contribute to the active site. The active-site Schiff-base intermediate with substrate; via pyruvic acid is S78. S78 is modified (pyruvic acid (Ser); by autocatalysis). The active-site Proton donor; for catalytic activity is the C92. Catalysis depends on proton acceptor; for processing activity residues S243 and H256.

Belongs to the eukaryotic AdoMetDC family. Requires pyruvate as cofactor. In terms of processing, is synthesized initially as an inactive proenzyme. Formation of the active enzyme involves a self-maturation process in which the active site pyruvoyl group is generated from an internal serine residue via an autocatalytic post-translational modification. Two non-identical subunits are generated from the proenzyme in this reaction, and the pyruvate is formed at the N-terminus of the alpha chain, which is derived from the carboxyl end of the proenzyme. The post-translation cleavage follows an unusual pathway, termed non-hydrolytic serinolysis, in which the side chain hydroxyl group of the serine supplies its oxygen atom to form the C-terminus of the beta chain, while the remainder of the serine residue undergoes an oxidative deamination to produce ammonia and the pyruvoyl group blocking the N-terminus of the alpha chain.

It carries out the reaction S-adenosyl-L-methionine + H(+) = S-adenosyl 3-(methylsulfanyl)propylamine + CO2. It functions in the pathway amine and polyamine biosynthesis; S-adenosylmethioninamine biosynthesis; S-adenosylmethioninamine from S-adenosyl-L-methionine: step 1/1. The protein is S-adenosylmethionine decarboxylase proenzyme (SAMDC) of Zea mays (Maize).